Consider the following 355-residue polypeptide: MHC class I-like protein MILL2 (355 aa).

Residues 1–29 (MKASSGKPREFRPAVLLLILGLLLRDSRG) form the signal peptide. The tract at residues 46-137 (RLTRTHTLRY…VINQKSQEEG (92 aa)) is alpha-1. 3 cysteine pairs are disulfide-bonded: cysteine 96-cysteine 107, cysteine 147-cysteine 210, and cysteine 249-cysteine 306. N-linked (GlcNAc...) asparagine glycans are attached at residues asparagine 104 and asparagine 152. The interval 138–229 (LHTLQATLGC…SLRNGLQDTG (92 aa)) is alpha-2. The segment at 230–323 (PPMVTVTCRN…SIMQTAVSGH (94 aa)) is alpha-3. An Ig-like C1-type domain is found at 231–321 (PMVTVTCRNY…NHSIMQTAVS (91 aa)). Residue asparagine 312 is glycosylated (N-linked (GlcNAc...) asparagine). Residues 324 to 329 (AAEDSQ) are connecting peptide. Residue aspartate 330 is the site of GPI-anchor amidated aspartate attachment. A propeptide spans 331 to 355 (VASSATASAGSALPVVLAVALARAN) (removed in mature form).

Belongs to the MHC class I family. In terms of assembly, heterodimer with B2M (beta-2-microglobulin). In terms of processing, N-glycosylated. Ubiquitously expressed in neonatal and adult tissues.

The protein localises to the cell membrane. Binds to heparan sulfate proteoglycans on the surface of fibroblast (NIH-3T3) cells. This chain is MHC class I-like protein MILL2, found in Mus musculus (Mouse).